Reading from the N-terminus, the 579-residue chain is uncharacterized protein (579 aa).

Helical transmembrane passes span 20 to 40 (ALWA…VVAI), 54 to 74 (ATVV…MLVA), 86 to 106 (LYLI…LSSG), 142 to 162 (GVAL…GPLA), 174 to 194 (WIFF…AYLI), 204 to 224 (FDWF…FGLQ), 234 to 254 (WIWA…YWQA), 279 to 299 (IAII…YAQA), 310 to 330 (VLFA…GMII), 335 to 355 (PLCV…WLLC), 366 to 386 (LVLP…PLTV), and 467 to 487 (MLLP…LVDF). Residues 516–579 (REPEEDCDTQ…DTESTAPSAL (64 aa)) form a disordered region. Low complexity predominate over residues 526 to 540 (PLRASRPAAAAASRS). The span at 570–579 (DTESTAPSAL) shows a compositional bias: polar residues.

This sequence belongs to the major facilitator superfamily. EmrB family.

The protein resides in the cell membrane. This is an uncharacterized protein from Mycobacterium tuberculosis (strain ATCC 25618 / H37Rv).